Reading from the N-terminus, the 61-residue chain is Large ribosomal subunit protein eL37 (61 aa).

Zn(2+) contacts are provided by C19, C22, C34, and C37. The C4-type zinc finger occupies 19–37; it reads CRRCGRNAYNVSKHYCAAC.

It belongs to the eukaryotic ribosomal protein eL37 family. It depends on Zn(2+) as a cofactor.

Its function is as follows. Binds to the 23S rRNA. This Saccharolobus islandicus (strain Y.N.15.51 / Yellowstone #2) (Sulfolobus islandicus) protein is Large ribosomal subunit protein eL37.